A 140-amino-acid polypeptide reads, in one-letter code: uncharacterized protein (140 aa).

The 129-residue stretch at 3-131 (RLDHIGIAVF…NGVLVELCEP (129 aa)) folds into the VOC domain. Positions 6, 53, 77, and 127 each coordinate a divalent metal cation.

Belongs to the methylmalonyl-CoA epimerase family.

This is an uncharacterized protein from Bacillus subtilis (strain 168).